The following is a 197-amino-acid chain: Protein lin-7 homolog C (197 aa).

Alanine 2 bears the N-acetylalanine mark. The short motif at 2–13 is the Kinase interacting site element; the sequence is AALGEPVRLERD. One can recognise an L27 domain in the interval 10–65; it reads LERDICRAIELLEKLQRSGEVPPQKLQALQRVLQSEFCNAVREVYEHVYETVDISS. The PDZ domain occupies 93 to 175; sequence VVELPKTEEG…KVKLVVRYTP (83 aa).

The protein belongs to the lin-7 family. In terms of assembly, forms a complex with CASK and APBA1 or CASKIN1. Component of the brain-specific heterotrimeric complex (LIN-10-LIN-2-LIN-7 complex) composed of at least APBA1, CASK, and LIN7, which associates with the motor protein KIF17 to transport vesicles along microtubules. Can also interact with other modular proteins containing protein-protein interaction domains like PALS1, PALS2, MPP7, DLG1, DLG2 and DLG3 through its L27 domain. Interacts with DLG4 and GRIN2B as well as CDH1 and CTNNB1, the channels KCNJ12/Kir2.2, KCNJ4/Kir2.3 and probably KCNJ2/Kir2.1 and SLC6A12/BGT-1 via its PDZ domain. The association of LIN7A with cadherin and beta-catenin is calcium-dependent, occurs at synaptic junctions and requires the actin cytoskeleton. Interacts with EGFR, ERBB2, ERBB3 and ERBB4 with both PDZ and KID domains. Associates with KIF17 via APBA1. Interacts with HTR4. Forms a tripartite complex composed of DLG1, MPP7 and LIN7 (LIN7A or LIN7C). Interacts with MAPK12.

It is found in the cell membrane. Its subcellular location is the basolateral cell membrane. It localises to the cell junction. The protein localises to the postsynaptic density membrane. The protein resides in the tight junction. It is found in the synapse. Its subcellular location is the synaptosome. Functionally, plays a role in establishing and maintaining the asymmetric distribution of channels and receptors at the plasma membrane of polarized cells. Forms membrane-associated multiprotein complexes that may regulate delivery and recycling of proteins to the correct membrane domains. The tripartite complex composed of LIN7 (LIN7A, LIN7B or LIN7C), CASK and APBA1 associates with the motor protein KIF17 to transport vesicles containing N-methyl-D-aspartate (NMDA) receptor subunit NR2B along microtubules. This complex may have the potential to couple synaptic vesicle exocytosis to cell adhesion in brain. Ensures the proper localization of GRIN2B (subunit 2B of the NMDA receptor) to neuronal postsynaptic density and may function in localizing synaptic vesicles at synapses where it is recruited by beta-catenin and cadherin. Required to localize Kir2 channels, GABA transporter (SLC6A12) and EGFR/ERBB1, ERBB2, ERBB3 and ERBB4 to the basolateral membrane of epithelial cells. This is Protein lin-7 homolog C (LIN7C) from Bos taurus (Bovine).